The chain runs to 907 residues: Valine--tRNA ligase (907 aa).

The short motif at 45–55 (PNVTGSLHMGH) is the 'HIGH' region element. The 'KMSKS' region signature appears at 554 to 558 (KMSKS). Lys-557 serves as a coordination point for ATP. Residues 838–870 (GQLIDLEAERARLVKNVSKIEQDIEKISVKLNN) are a coiled coil.

The protein belongs to the class-I aminoacyl-tRNA synthetase family. ValS type 1 subfamily. Monomer.

The protein localises to the cytoplasm. It carries out the reaction tRNA(Val) + L-valine + ATP = L-valyl-tRNA(Val) + AMP + diphosphate. Catalyzes the attachment of valine to tRNA(Val). As ValRS can inadvertently accommodate and process structurally similar amino acids such as threonine, to avoid such errors, it has a 'posttransfer' editing activity that hydrolyzes mischarged Thr-tRNA(Val) in a tRNA-dependent manner. The chain is Valine--tRNA ligase from Bartonella quintana (strain Toulouse) (Rochalimaea quintana).